The primary structure comprises 776 residues: Transcriptional regulator QRICH1 (776 aa).

M1 is modified (N-acetylmethionine). Positions 6–48 (ENTISFEEYIRVKARSVPQHRMKEFLDSLASKGPEALQEFQQT) constitute a CARD domain. Disordered stretches follow at residues 139-164 (IQGQ…PSQL) and 218-240 (ALSP…GTAS). A Phosphoserine modification is found at S345. Glycyl lysine isopeptide (Lys-Gly) (interchain with G-Cter in SUMO2) cross-links involve residues K353 and K358. Positions 419–429 (QQQPQQQTPQE) are enriched in low complexity. The tract at residues 419–441 (QQQPQQQTPQEQTPPPQQQQQQL) is disordered. S464 is modified (phosphoserine).

It is found in the nucleus. Its subcellular location is the cytoplasm. It localises to the cell membrane. In terms of biological role, transcriptional regulator that acts as a mediator of the integrated stress response (ISR) through transcriptional control of protein homeostasis under conditions of ER stress. Controls the outcome of the unfolded protein response (UPR) which is an ER-stress response pathway. ER stress induces QRICH1 translation by a ribosome translation re-initiation mechanism in response to EIF2S1/eIF-2-alpha phosphorylation, and stress-induced QRICH1 regulates a transcriptional program associated with protein translation, protein secretion-mediated proteotoxicity and cell death during the terminal UPR. May cooperate with ATF4 transcription factor signaling to regulate ER homeostasis which is critical for cell viability. Up-regulates CASP3/caspase-3 activity in epithelial cells under ER stress. Central regulator of proteotoxicity associated with ER stress-mediated inflammatory diseases in the intestines and liver. Involved in chondrocyte hypertrophy, a process required for normal longitudinal bone growth. The chain is Transcriptional regulator QRICH1 from Homo sapiens (Human).